A 277-amino-acid chain; its full sequence is Heme oxygenase (277 aa).

Residue H29 participates in heme b binding.

The protein belongs to the heme oxygenase family.

The protein localises to the microsome. It is found in the endoplasmic reticulum. The enzyme catalyses heme b + 3 reduced [NADPH--hemoprotein reductase] + 3 O2 = biliverdin IXalpha + CO + Fe(2+) + 3 oxidized [NADPH--hemoprotein reductase] + 3 H2O + H(+). Its function is as follows. Heme oxygenase cleaves the heme ring at the alpha methene bridge to form biliverdin. Biliverdin is subsequently converted to bilirubin by biliverdin reductase. Under physiological conditions, the activity of heme oxygenase is highest in the spleen, where senescent erythrocytes are sequestrated and destroyed. This is Heme oxygenase (hmox) from Takifugu rubripes (Japanese pufferfish).